The sequence spans 75 residues: uncharacterized protein (75 aa).

It belongs to the HSBP1 family.

This is an uncharacterized protein from Schizosaccharomyces pombe (strain 972 / ATCC 24843) (Fission yeast).